The chain runs to 419 residues: O-methyltransferase desB (419 aa).

S-adenosyl-L-methionine is bound by residues 255 to 256, Asp-280, 306 to 307, and Arg-323; these read GG and DF. Residue His-326 is the Proton acceptor of the active site.

The protein belongs to the class I-like SAM-binding methyltransferase superfamily. Cation-independent O-methyltransferase family. The cofactor is S-adenosyl-L-methionine.

Its pathway is secondary metabolite biosynthesis. Its function is as follows. Non-reducing polyketide synthase; part of the gene cluster that mediates the biosynthesis of the bicoumarin desertorin. The non-reducing polyketide synthase desS first catalyzes the formation of the pentaketidic 4,7-dihydroxy-5-methylcoumarin from acetyl coenzyme A and 4 malonyl coenzyme A molecules. Further O-methylation by desB leads to the formation of 7-demethylsiderin. Then, an oxidative phenol coupling catalyzed by the cytochrome P450 monooxygenase desC forms the 6,8'-dimer M-desertorin A via dimerization the monomeric precursor, 7-demethylsiderin. M-desertorin A is further converted to M-desertorin C. This chain is O-methyltransferase desB, found in Aspergillus desertorum (Emericella desertorum).